Consider the following 213-residue polypeptide: ATP synthase peripheral stalk subunit OSCP, mitochondrial (213 aa).

A mitochondrion-targeting transit peptide spans 1-23; the sequence is MATPAVSGLSRQVRCFSTSVVRP. The SIFI-degron motif lies at 5-23; the sequence is AVSGLSRQVRCFSTSVVRP. Lysine 54, lysine 60, lysine 70, and lysine 73 each carry N6-acetyllysine. An N6-succinyllysine modification is found at lysine 90. An N6-acetyllysine; alternate mark is found at lysine 158 and lysine 162. N6-succinyllysine; alternate occurs at positions 158 and 162. An N6-acetyllysine mark is found at lysine 172, lysine 176, and lysine 192. N6-succinyllysine is present on lysine 199.

It belongs to the ATPase delta chain family. In terms of assembly, component of the ATP synthase complex composed at least of ATP5F1A/subunit alpha, ATP5F1B/subunit beta, ATP5MC1/subunit c (homooctomer), MT-ATP6/subunit a, MT-ATP8/subunit 8, ATP5ME/subunit e, ATP5MF/subunit f, ATP5MG/subunit g, ATP5MK/subunit k, ATP5MJ/subunit j, ATP5F1C/subunit gamma, ATP5F1D/subunit delta, ATP5F1E/subunit epsilon, ATP5PF/subunit F6, ATP5PB/subunit b, ATP5PD/subunit d, ATP5PO/subunit OSCP. ATP synthase complex consists of a soluble F(1) head domain (subunits alpha(3) and beta(3)) - the catalytic core - and a membrane F(0) domain - the membrane proton channel (subunits c, a, 8, e, f, g, k and j). These two domains are linked by a central stalk (subunits gamma, delta, and epsilon) rotating inside the F1 region and a stationary peripheral stalk (subunits F6, b, d, and OSCP). In terms of processing, acetylation at Lys-162 decreases ATP production. Deacetylated by SIRT3. Post-translationally, in response to mitochondrial stress, the precursor protein is ubiquitinated by the SIFI complex in the cytoplasm before mitochondrial import, leading to its degradation. Within the SIFI complex, UBR4 initiates ubiquitin chain that are further elongated or branched by KCMF1.

The protein resides in the mitochondrion. It is found in the mitochondrion inner membrane. Functionally, subunit OSCP, of the mitochondrial membrane ATP synthase complex (F(1)F(0) ATP synthase or Complex V) that produces ATP from ADP in the presence of a proton gradient across the membrane which is generated by electron transport complexes of the respiratory chain. ATP synthase complex consist of a soluble F(1) head domain - the catalytic core - and a membrane F(1) domain - the membrane proton channel. These two domains are linked by a central stalk rotating inside the F(1) region and a stationary peripheral stalk. During catalysis, ATP synthesis in the catalytic domain of F(1) is coupled via a rotary mechanism of the central stalk subunits to proton translocation. In vivo, can only synthesize ATP although its ATP hydrolase activity can be activated artificially in vitro. Part of the complex F(0) domain. Part of the complex F(0) domain and the peripheric stalk, which acts as a stator to hold the catalytic alpha(3)beta(3) subcomplex and subunit a/ATP6 static relative to the rotary elements. The protein is ATP synthase peripheral stalk subunit OSCP, mitochondrial of Pongo abelii (Sumatran orangutan).